The sequence spans 129 residues: Protein BEX2 (129 aa).

A disordered region spans residues 1–37; sequence MESKVEQGVKNLNMENDHQEKEEKEEKPQDASKRDPI. Residues 15–36 show a composition bias toward basic and acidic residues; it reads ENDHQEKEEKEEKPQDASKRDP. R51 is subject to Omega-N-methylarginine. A his cluster region spans residues 118–122; that stretch reads HHDHH. Zn(2+) is bound at residue C126.

Belongs to the BEX family. In terms of assembly, interacts with LMO2, possibly leading to regulate the transcriptional activity of a DNA-binding complex containing LMO2. Interacts with OMP. Primarily localized to neuronal cells within several regions of the brain, including the olfactory epithelium, bulb, peri/paraventricular nuclei, suprachiasmatic nucleus, arcuate nucleus, median eminence, lateral hypothalamic area, thalamus, hippocampus and cerebellum (at protein level).

It is found in the cytoplasm. The protein resides in the nucleus. Its function is as follows. Regulator of mitochondrial apoptosis and G1 cell cycle. Regulates the level of PP2A regulatory subunit B and PP2A phosphatase activity. In absence of reductive stress, acts as a pseudosubstrate for the CRL2(FEM1B) complex: associates with FEM1B via zinc, thereby preventing association between FEM1B and its substrates. The chain is Protein BEX2 from Mus musculus (Mouse).